Here is a 309-residue protein sequence, read N- to C-terminus: Ribonuclease Z (309 aa).

His-63, His-65, Asp-67, His-68, His-145, Asp-216, and His-274 together coordinate Zn(2+). Catalysis depends on Asp-67, which acts as the Proton acceptor.

Belongs to the RNase Z family. As to quaternary structure, homodimer. Requires Zn(2+) as cofactor.

The catalysed reaction is Endonucleolytic cleavage of RNA, removing extra 3' nucleotides from tRNA precursor, generating 3' termini of tRNAs. A 3'-hydroxy group is left at the tRNA terminus and a 5'-phosphoryl group is left at the trailer molecule.. Functionally, zinc phosphodiesterase, which displays some tRNA 3'-processing endonuclease activity. Probably involved in tRNA maturation, by removing a 3'-trailer from precursor tRNA. The chain is Ribonuclease Z from Streptococcus uberis (strain ATCC BAA-854 / 0140J).